We begin with the raw amino-acid sequence, 111 residues long: Phosphoribosyl-ATP pyrophosphatase (111 aa).

Belongs to the PRA-PH family.

The protein localises to the cytoplasm. It catalyses the reaction 1-(5-phospho-beta-D-ribosyl)-ATP + H2O = 1-(5-phospho-beta-D-ribosyl)-5'-AMP + diphosphate + H(+). Its pathway is amino-acid biosynthesis; L-histidine biosynthesis; L-histidine from 5-phospho-alpha-D-ribose 1-diphosphate: step 2/9. This Azotobacter vinelandii (strain DJ / ATCC BAA-1303) protein is Phosphoribosyl-ATP pyrophosphatase.